We begin with the raw amino-acid sequence, 316 residues long: Apolipoprotein E (316 aa).

A signal peptide spans 1-18 (MKALWAVLVVTLLAGCLA). 8 tandem repeats follow at residues 76 to 97 (VLMEDTMTELKAYKKELEEQMG), 98 to 119 (PMAEETRARLAKEVQAAQSRLG), 120 to 141 (ADMEDLRNRLGLYRNEVQTMLG), 142 to 163 (QSTEELRARLTTHLRKLRKRLM), 164 to 185 (RDAEDLQKRLAVYKAGAREGAE), 186 to 207 (RGVGAIRERLGPLVEQGRQRTA), 208 to 229 (NLGAGAAQPLRERAQALGARIR), and 230 to 251 (GRLEEVGNQARDRLEEVREQME). Positions 76 to 251 (VLMEDTMTEL…RLEEVREQME (176 aa)) are 8 X 22 AA approximate tandem repeats. Methionine 139 bears the Methionine sulfoxide mark. Serine 143 is subject to Phosphoserine. The LDL and other lipoprotein receptors binding stretch occupies residues 154-164 (HLRKLRKRLMR). A heparin-binding site is contributed by 158–161 (LRKR). Residues 206-286 (TANLGAGAAQ…GWFEPLVEDM (81 aa)) are lipid-binding and lipoprotein association. A heparin-binding site is contributed by 225–232 (GARIRGRL). Residues 262-316 (QQMRLQAEIFQTRLKGWFEPLVEDMQRQWANLMEKIQASVATNPIPPSSVPQESQ) form a homooligomerization region. Residues 274 to 286 (RLKGWFEPLVEDM) are specificity for association with VLDL.

This sequence belongs to the apolipoprotein A1/A4/E family. In terms of assembly, homotetramer. May interact with ABCA1; functionally associated with ABCA1 in the biogenesis of HDLs. May interact with APP/A4 amyloid-beta peptide; the interaction is extremely stable in vitro but its physiological significance is unclear. May interact with MAPT. May interact with MAP2. In the cerebrospinal fluid, interacts with secreted SORL1. Interacts with PMEL; this allows the loading of PMEL luminal fragment on ILVs to induce fibril nucleation. APOE exists as multiple glycosylated and sialylated glycoforms within cells and in plasma. The extent of glycosylation and sialylation are tissue and context specific. In terms of processing, glycated in plasma VLDL. Post-translationally, phosphorylated by FAM20C in the extracellular medium.

The protein resides in the secreted. The protein localises to the extracellular space. It localises to the extracellular matrix. It is found in the extracellular vesicle. Its subcellular location is the endosome. The protein resides in the multivesicular body. APOE is an apolipoprotein, a protein associating with lipid particles, that mainly functions in lipoprotein-mediated lipid transport between organs via the plasma and interstitial fluids. APOE is a core component of plasma lipoproteins and is involved in their production, conversion and clearance. Apolipoproteins are amphipathic molecules that interact both with lipids of the lipoprotein particle core and the aqueous environment of the plasma. As such, APOE associates with chylomicrons, chylomicron remnants, very low density lipoproteins (VLDL) and intermediate density lipoproteins (IDL) but shows a preferential binding to high-density lipoproteins (HDL). It also binds a wide range of cellular receptors including the LDL receptor/LDLR, the LDL receptor-related proteins LRP1, LRP2 and LRP8 and the very low-density lipoprotein receptor/VLDLR that mediate the cellular uptake of the APOE-containing lipoprotein particles. Finally, APOE also has a heparin-binding activity and binds heparan-sulfate proteoglycans on the surface of cells, a property that supports the capture and the receptor-mediated uptake of APOE-containing lipoproteins by cells. A main function of APOE is to mediate lipoprotein clearance through the uptake of chylomicrons, VLDLs, and HDLs by hepatocytes. APOE is also involved in the biosynthesis by the liver of VLDLs as well as their uptake by peripheral tissues ensuring the delivery of triglycerides and energy storage in muscle, heart and adipose tissues. By participating in the lipoprotein-mediated distribution of lipids among tissues, APOE plays a critical role in plasma and tissues lipid homeostasis. APOE is also involved in two steps of reverse cholesterol transport, the HDLs-mediated transport of cholesterol from peripheral tissues to the liver, and thereby plays an important role in cholesterol homeostasis. First, it is functionally associated with ABCA1 in the biogenesis of HDLs in tissues. Second, it is enriched in circulating HDLs and mediates their uptake by hepatocytes. APOE also plays an important role in lipid transport in the central nervous system, regulating neuron survival and sprouting. This chain is Apolipoprotein E (APOE), found in Microtus ochrogaster (Prairie vole).